The primary structure comprises 248 residues: Coenzyme F420:L-glutamate ligase (248 aa).

Residues 15 to 18, 45 to 46, and lysine 50 contribute to the GTP site; these read IPLI and ET. Aspartate 115 provides a ligand contact to a divalent metal cation. Asparagine 118 lines the GTP pocket. The a divalent metal cation site is built by aspartate 155, serine 156, and glutamine 213. 211–218 lines the GTP pocket; it reads MGQSNEGI.

It belongs to the CofE family. Homodimer. It depends on Mg(2+) as a cofactor. Requires Mn(2+) as cofactor. K(+) is required as a cofactor.

The enzyme catalyses oxidized coenzyme F420-0 + GTP + L-glutamate = oxidized coenzyme F420-1 + GDP + phosphate + H(+). The catalysed reaction is oxidized coenzyme F420-1 + GTP + L-glutamate = oxidized coenzyme F420-2 + GDP + phosphate + H(+). Its pathway is cofactor biosynthesis; coenzyme F420 biosynthesis. Catalyzes the GTP-dependent successive addition of two or more gamma-linked L-glutamates to the L-lactyl phosphodiester of 7,8-didemethyl-8-hydroxy-5-deazariboflavin (F420-0) to form coenzyme F420-0-glutamyl-glutamate (F420-2) or polyglutamated F420 derivatives. This is Coenzyme F420:L-glutamate ligase from Methanococcus maripaludis (strain DSM 14266 / JCM 13030 / NBRC 101832 / S2 / LL).